The chain runs to 315 residues: Homoserine kinase (315 aa).

97–107 provides a ligand contact to ATP; it reads PPARGLGSSAT.

This sequence belongs to the GHMP kinase family. Homoserine kinase subfamily.

It is found in the cytoplasm. The catalysed reaction is L-homoserine + ATP = O-phospho-L-homoserine + ADP + H(+). It participates in amino-acid biosynthesis; L-threonine biosynthesis; L-threonine from L-aspartate: step 4/5. Its function is as follows. Catalyzes the ATP-dependent phosphorylation of L-homoserine to L-homoserine phosphate. This chain is Homoserine kinase, found in Parasynechococcus marenigrum (strain WH8102).